We begin with the raw amino-acid sequence, 286 residues long: Nucleotide-binding protein Tgr7_0722 (286 aa).

8-15 provides a ligand contact to ATP; it reads GLSGSGKS. 60–63 contacts GTP; sequence DVRS.

It belongs to the RapZ-like family.

In terms of biological role, displays ATPase and GTPase activities. This chain is Nucleotide-binding protein Tgr7_0722, found in Thioalkalivibrio sulfidiphilus (strain HL-EbGR7).